The chain runs to 828 residues: Periplasmic nitrate reductase (828 aa).

Positions 1 to 31 form a signal peptide, tat-type signal; sequence MKLSRRSFMKANAVAAAAAAAGLSVPGVARA. Residues 39–95 enclose the 4Fe-4S Mo/W bis-MGD-type domain; the sequence is IKWDKAPCRFCGTGCGVLVGTQQGRIVACQGDPDAPVNRGLNCIKGYFLPKIMYGKD. C46, C49, C53, and C81 together coordinate [4Fe-4S] cluster. Mo-bis(molybdopterin guanine dinucleotide) contacts are provided by residues K83, Q150, N175, C179, 212–219, 243–247, 262–264, M372, Q376, N482, 508–509, K531, D558, and 718–727; these read WGSNMAEM, STFQH, QSD, SD, and TGRVLEHWHT. Substrate is bound at residue F794. N802 and K819 together coordinate Mo-bis(molybdopterin guanine dinucleotide).

This sequence belongs to the prokaryotic molybdopterin-containing oxidoreductase family. NasA/NapA/NarB subfamily. Component of the periplasmic nitrate reductase NapAB complex composed of NapA and NapB. It depends on [4Fe-4S] cluster as a cofactor. Mo-bis(molybdopterin guanine dinucleotide) serves as cofactor. Post-translationally, predicted to be exported by the Tat system. The position of the signal peptide cleavage has not been experimentally proven.

It localises to the periplasm. The catalysed reaction is 2 Fe(II)-[cytochrome] + nitrate + 2 H(+) = 2 Fe(III)-[cytochrome] + nitrite + H2O. Functionally, catalytic subunit of the periplasmic nitrate reductase complex NapAB. Receives electrons from NapB and catalyzes the reduction of nitrate to nitrite. This chain is Periplasmic nitrate reductase, found in Citrobacter koseri (strain ATCC BAA-895 / CDC 4225-83 / SGSC4696).